A 208-amino-acid chain; its full sequence is N-(5'-phosphoribosyl)anthranilate isomerase (208 aa).

This sequence belongs to the TrpF family.

It carries out the reaction N-(5-phospho-beta-D-ribosyl)anthranilate = 1-(2-carboxyphenylamino)-1-deoxy-D-ribulose 5-phosphate. The protein operates within amino-acid biosynthesis; L-tryptophan biosynthesis; L-tryptophan from chorismate: step 3/5. The protein is N-(5'-phosphoribosyl)anthranilate isomerase of Dechloromonas aromatica (strain RCB).